We begin with the raw amino-acid sequence, 270 residues long: Glutamate racemase (270 aa).

Substrate-binding positions include 10–11 and 42–43; these read DS and YG. Cys-74 functions as the Proton donor/acceptor in the catalytic mechanism. Residue 75–76 coordinates substrate; the sequence is NT. Cys-189 serves as the catalytic Proton donor/acceptor. A substrate-binding site is contributed by 190-191; the sequence is TH.

The protein belongs to the aspartate/glutamate racemases family.

It catalyses the reaction L-glutamate = D-glutamate. The protein operates within cell wall biogenesis; peptidoglycan biosynthesis. Its function is as follows. Provides the (R)-glutamate required for cell wall biosynthesis. The sequence is that of Glutamate racemase from Bartonella henselae (strain ATCC 49882 / DSM 28221 / CCUG 30454 / Houston 1) (Rochalimaea henselae).